The following is a 211-amino-acid chain: Cytochrome c biogenesis ATP-binding export protein CcmA (211 aa).

In terms of domain architecture, ABC transporter spans 8–210; that stretch reads LEAKNLQCER…EVRRIQLGAV (203 aa). 40–47 contributes to the ATP binding site; that stretch reads GPNGAGKT.

It belongs to the ABC transporter superfamily. CcmA exporter (TC 3.A.1.107) family. In terms of assembly, the complex is composed of two ATP-binding proteins (CcmA) and two transmembrane proteins (CcmB).

It is found in the cell inner membrane. It carries out the reaction heme b(in) + ATP + H2O = heme b(out) + ADP + phosphate + H(+). Its function is as follows. Part of the ABC transporter complex CcmAB involved in the biogenesis of c-type cytochromes; once thought to export heme, this seems not to be the case, but its exact role is uncertain. Responsible for energy coupling to the transport system. The chain is Cytochrome c biogenesis ATP-binding export protein CcmA from Hahella chejuensis (strain KCTC 2396).